Consider the following 100-residue polypeptide: Protein RADIALIS-like 1 (100 aa).

Residues Gln-9–Asn-64 form the SANT domain. Positions Phe-73–Gln-100 are disordered. Polar residues predominate over residues Tyr-76 to Leu-87.

It localises to the nucleus. Its function is as follows. Probable transcription factor. The protein is Protein RADIALIS-like 1 (RL1) of Arabidopsis thaliana (Mouse-ear cress).